Reading from the N-terminus, the 686-residue chain is Methionine--tRNA ligase (686 aa).

Residues 15–25 (PYTNGPIHIGH) carry the 'HIGH' region motif. Zn(2+) contacts are provided by Cys-147, Cys-150, Cys-160, and Cys-163. The 'KMSKS' region signature appears at 336–340 (KLSTS). Position 339 (Thr-339) interacts with ATP. Positions 584-686 (DFAKMDLRVG…AGVGNGEGIN (103 aa)) constitute a tRNA-binding domain.

It belongs to the class-I aminoacyl-tRNA synthetase family. MetG type 1 subfamily. In terms of assembly, homodimer. Zn(2+) is required as a cofactor.

Its subcellular location is the cytoplasm. It carries out the reaction tRNA(Met) + L-methionine + ATP = L-methionyl-tRNA(Met) + AMP + diphosphate. Its function is as follows. Is required not only for elongation of protein synthesis but also for the initiation of all mRNA translation through initiator tRNA(fMet) aminoacylation. The chain is Methionine--tRNA ligase from Flavobacterium psychrophilum (strain ATCC 49511 / DSM 21280 / CIP 103535 / JIP02/86).